Here is a 346-residue protein sequence, read N- to C-terminus: Probable long-chain-alcohol O-fatty-acyltransferase 6 (346 aa).

Helical transmembrane passes span 7–27 (LFIQ…YLTP), 36–56 (LLSV…FSTV), 59–79 (SFTI…LFAL), 116–136 (FPKW…LQAY), 146–166 (FLLG…LTLI), 228–248 (FFAI…LYFY), 255–275 (TWEV…EVAL), and 289–309 (PAVS…WLFS).

The protein belongs to the wax synthase family.

The protein resides in the membrane. It catalyses the reaction a long chain fatty alcohol + a fatty acyl-CoA = a wax ester + CoA. In terms of biological role, catalyzes the final step in the synthesis of long-chain linear esters (waxes). This is Probable long-chain-alcohol O-fatty-acyltransferase 6 (AT6) from Arabidopsis thaliana (Mouse-ear cress).